A 151-amino-acid polypeptide reads, in one-letter code: Transcriptional regulator MraZ (151 aa).

2 consecutive SpoVT-AbrB domains span residues 5–52 (ANAI…PLSE) and 81–124 (AVDL…DEDA).

This sequence belongs to the MraZ family. Forms oligomers.

Its subcellular location is the cytoplasm. It localises to the nucleoid. The polypeptide is Transcriptional regulator MraZ (Pseudomonas syringae pv. tomato (strain ATCC BAA-871 / DC3000)).